The sequence spans 89 residues: Large ribosomal subunit protein bL27 (89 aa).

Residues 1–21 (MAHKKAGGSSRNGRDSAGRRL) form a disordered region.

This sequence belongs to the bacterial ribosomal protein bL27 family.

This is Large ribosomal subunit protein bL27 from Erythrobacter litoralis (strain HTCC2594).